A 478-amino-acid polypeptide reads, in one-letter code: D-ribulose kinase (478 aa).

A chloroplast-targeting transit peptide spans 1–38; that stretch reads MLILRQFQISSFELFQSPKQTGFYSSSRSVPLPRTRFY. Substrate is bound by residues aspartate 60, 64 to 67, and aspartate 278; that span reads SGGR. ATP is bound by residues serine 300, glycine 338, and 433-437; that span reads GGAKN.

The protein belongs to the FGGY kinase family. Requires a divalent metal cation as cofactor.

Its subcellular location is the plastid. The protein resides in the chloroplast. The catalysed reaction is D-ribulose + ATP = D-ribulose 5-phosphate + ADP + H(+). Its function is as follows. Exhibits ATP hydrolysis without substrate. Can phosphorylate D-ribulose with low efficiency. In Arabidopsis thaliana (Mouse-ear cress), this protein is D-ribulose kinase.